We begin with the raw amino-acid sequence, 274 residues long: 4-diphosphocytidyl-2-C-methyl-D-erythritol kinase (274 aa).

Lysine 8 is a catalytic residue. 94-104 (PSGAGLGGGSA) serves as a coordination point for ATP. Aspartate 136 is an active-site residue.

This sequence belongs to the GHMP kinase family. IspE subfamily.

It catalyses the reaction 4-CDP-2-C-methyl-D-erythritol + ATP = 4-CDP-2-C-methyl-D-erythritol 2-phosphate + ADP + H(+). Its pathway is isoprenoid biosynthesis; isopentenyl diphosphate biosynthesis via DXP pathway; isopentenyl diphosphate from 1-deoxy-D-xylulose 5-phosphate: step 3/6. Its function is as follows. Catalyzes the phosphorylation of the position 2 hydroxy group of 4-diphosphocytidyl-2C-methyl-D-erythritol. The protein is 4-diphosphocytidyl-2-C-methyl-D-erythritol kinase of Bacteroides fragilis (strain ATCC 25285 / DSM 2151 / CCUG 4856 / JCM 11019 / LMG 10263 / NCTC 9343 / Onslow / VPI 2553 / EN-2).